Here is a 66-residue protein sequence, read N- to C-terminus: uncharacterized protein (66 aa).

Transmembrane regions (helical) follow at residues 3 to 23 (LIHV…PFAN) and 34 to 54 (FILA…AIVY).

It is found in the cell membrane. This is an uncharacterized protein from Bacillus subtilis (strain 168).